The primary structure comprises 208 residues: Methyl-CpG-binding domain protein 3-like 5 (208 aa).

It belongs to the MBD3L family.

The chain is Methyl-CpG-binding domain protein 3-like 5 (MBD3L5) from Homo sapiens (Human).